The following is a 99-amino-acid chain: Large ribosomal subunit protein uL23 (99 aa).

This sequence belongs to the universal ribosomal protein uL23 family. In terms of assembly, part of the 50S ribosomal subunit. Contacts protein L29, and trigger factor when it is bound to the ribosome.

Its function is as follows. One of the early assembly proteins it binds 23S rRNA. One of the proteins that surrounds the polypeptide exit tunnel on the outside of the ribosome. Forms the main docking site for trigger factor binding to the ribosome. This is Large ribosomal subunit protein uL23 from Oenococcus oeni (strain ATCC BAA-331 / PSU-1).